Consider the following 302-residue polypeptide: N-acetyl-D-glucosamine kinase (302 aa).

ATP contacts are provided by residues 4-11 (GFDVGGTK) and 133-140 (GFGGGLVF). Zn(2+) contacts are provided by His157, Cys177, Cys179, and Cys184.

Belongs to the ROK (NagC/XylR) family. NagK subfamily.

It catalyses the reaction N-acetyl-D-glucosamine + ATP = N-acetyl-D-glucosamine 6-phosphate + ADP + H(+). It functions in the pathway cell wall biogenesis; peptidoglycan recycling. Its function is as follows. Catalyzes the phosphorylation of N-acetyl-D-glucosamine (GlcNAc) derived from cell-wall degradation, yielding GlcNAc-6-P. This chain is N-acetyl-D-glucosamine kinase, found in Aliivibrio salmonicida (strain LFI1238) (Vibrio salmonicida (strain LFI1238)).